We begin with the raw amino-acid sequence, 390 residues long: GTPase Obg (390 aa).

Positions M1–L159 constitute an Obg domain. Residues N127–G147 are disordered. Over residues R129–T145 the composition is skewed to polar residues. The region spanning A160 to I333 is the OBG-type G domain. GTP-binding positions include G166–S173, F191–V195, D213–G216, N283–D286, and S314–A316. The Mg(2+) site is built by S173 and T193.

Belongs to the TRAFAC class OBG-HflX-like GTPase superfamily. OBG GTPase family. Monomer. Mg(2+) is required as a cofactor.

It is found in the cytoplasm. Its function is as follows. An essential GTPase which binds GTP, GDP and possibly (p)ppGpp with moderate affinity, with high nucleotide exchange rates and a fairly low GTP hydrolysis rate. Plays a role in control of the cell cycle, stress response, ribosome biogenesis and in those bacteria that undergo differentiation, in morphogenesis control. The sequence is that of GTPase Obg from Escherichia coli (strain K12 / DH10B).